A 573-amino-acid polypeptide reads, in one-letter code: 60 kDa heat shock protein, mitochondrial (573 aa).

The N-terminal 26 residues, 1 to 26, are a transit peptide targeting the mitochondrion; the sequence is MLRLPTVFRQMRPVSRVLAPHLTRAY. Position 31 is an N6-succinyllysine (Lys-31). 2 positions are modified to phosphoserine: Ser-67 and Ser-70. Position 75 (Lys-75) interacts with ATP. N6-acetyllysine is present on Lys-75. Lys-82 bears the N6-acetyllysine; alternate mark. Lys-82 is modified (N6-succinyllysine; alternate). At Lys-87 the chain carries N6-acetyllysine. Tyr-90 is modified (phosphotyrosine). N6-acetyllysine is present on Lys-91. 111 to 115 is an ATP binding site; that stretch reads DGTTT. Lys-125 is modified (N6-acetyllysine; alternate). Lys-125 is subject to N6-succinyllysine; alternate. Position 130 is an N6-acetyllysine (Lys-130). Position 133 is an N6-acetyllysine; alternate (Lys-133). Residue Lys-133 is modified to N6-succinyllysine; alternate. The residue at position 133 (Lys-133) is an N6-malonyllysine; alternate. Lys-156 is modified (N6-acetyllysine). Lys-191, Lys-202, Lys-205, Lys-218, and Lys-236 each carry N6-acetyllysine; alternate. 5 positions are modified to N6-succinyllysine; alternate: Lys-191, Lys-202, Lys-205, Lys-218, and Lys-236. Lys-249 bears the N6-acetyllysine mark. An N6-acetyllysine; alternate modification is found at Lys-250. N6-succinyllysine; alternate is present on Lys-250. N6-acetyllysine occurs at positions 269 and 292. Lys-301 carries the N6-succinyllysine modification. Position 314 is an N6-acetyllysine (Lys-314). Lys-352 is subject to N6-acetyllysine; alternate. Lys-352 is subject to N6-succinyllysine; alternate. N6-acetyllysine occurs at positions 359 and 389. An N6-acetyllysine; alternate modification is found at Lys-396. Lys-396 is modified (N6-succinyllysine; alternate). Phosphoserine is present on Ser-410. Gly-440 contributes to the ATP binding site. Lys-469 is subject to N6-acetyllysine. At Lys-481 the chain carries N6-acetyllysine; alternate. Lys-481 is modified (N6-succinyllysine; alternate). Residue Ser-488 is modified to Phosphoserine. Asp-520 serves as a coordination point for ATP. Lys-551 participates in a covalent cross-link: Glycyl lysine isopeptide (Lys-Gly) (interchain with G-Cter in SUMO2).

The protein belongs to the chaperonin (HSP60) family. Homoheptamer arranged in a ring structure. The functional units of these chaperonins consist of heptameric rings of the large subunit Hsp60, which function as a back-to-back double ring. Interacts with 2 heptameric Hsp10 rings to form the symmetrical football complex. Interacts with HRAS. Interacts with ATAD3A. Interacts with ETFBKMT and EEF1AKMT3. Interacts with MFHAS1. In terms of assembly, (Microbial infection) Interacts with hepatitis B virus/HBV protein X. As to quaternary structure, (Microbial infection) Interacts with HTLV-1 protein p40tax.

Its subcellular location is the mitochondrion matrix. It carries out the reaction ATP + H2O + a folded polypeptide = ADP + phosphate + an unfolded polypeptide.. Its function is as follows. Chaperonin implicated in mitochondrial protein import and macromolecular assembly. Together with Hsp10, facilitates the correct folding of imported proteins. May also prevent misfolding and promote the refolding and proper assembly of unfolded polypeptides generated under stress conditions in the mitochondrial matrix. The functional units of these chaperonins consist of heptameric rings of the large subunit Hsp60, which function as a back-to-back double ring. In a cyclic reaction, Hsp60 ring complexes bind one unfolded substrate protein per ring, followed by the binding of ATP and association with 2 heptameric rings of the co-chaperonin Hsp10. This leads to sequestration of the substrate protein in the inner cavity of Hsp60 where, for a certain period of time, it can fold undisturbed by other cell components. Synchronous hydrolysis of ATP in all Hsp60 subunits results in the dissociation of the chaperonin rings and the release of ADP and the folded substrate protein. The sequence is that of 60 kDa heat shock protein, mitochondrial (HSPD1) from Homo sapiens (Human).